The primary structure comprises 316 residues: 4-hydroxy-3-methylbut-2-enyl diphosphate reductase (316 aa).

C12 contacts [4Fe-4S] cluster. (2E)-4-hydroxy-3-methylbut-2-enyl diphosphate-binding residues include H41 and H74. Residues H41 and H74 each coordinate dimethylallyl diphosphate. H41 and H74 together coordinate isopentenyl diphosphate. Position 96 (C96) interacts with [4Fe-4S] cluster. A (2E)-4-hydroxy-3-methylbut-2-enyl diphosphate-binding site is contributed by H124. Residue H124 participates in dimethylallyl diphosphate binding. Residue H124 coordinates isopentenyl diphosphate. E126 acts as the Proton donor in catalysis. A (2E)-4-hydroxy-3-methylbut-2-enyl diphosphate-binding site is contributed by T169. C199 is a [4Fe-4S] cluster binding site. Positions 227, 228, 229, and 271 each coordinate (2E)-4-hydroxy-3-methylbut-2-enyl diphosphate. Residues S227, S228, N229, and S271 each coordinate dimethylallyl diphosphate. 4 residues coordinate isopentenyl diphosphate: S227, S228, N229, and S271.

It belongs to the IspH family. [4Fe-4S] cluster serves as cofactor.

It carries out the reaction isopentenyl diphosphate + 2 oxidized [2Fe-2S]-[ferredoxin] + H2O = (2E)-4-hydroxy-3-methylbut-2-enyl diphosphate + 2 reduced [2Fe-2S]-[ferredoxin] + 2 H(+). The catalysed reaction is dimethylallyl diphosphate + 2 oxidized [2Fe-2S]-[ferredoxin] + H2O = (2E)-4-hydroxy-3-methylbut-2-enyl diphosphate + 2 reduced [2Fe-2S]-[ferredoxin] + 2 H(+). Its pathway is isoprenoid biosynthesis; dimethylallyl diphosphate biosynthesis; dimethylallyl diphosphate from (2E)-4-hydroxy-3-methylbutenyl diphosphate: step 1/1. The protein operates within isoprenoid biosynthesis; isopentenyl diphosphate biosynthesis via DXP pathway; isopentenyl diphosphate from 1-deoxy-D-xylulose 5-phosphate: step 6/6. Functionally, catalyzes the conversion of 1-hydroxy-2-methyl-2-(E)-butenyl 4-diphosphate (HMBPP) into a mixture of isopentenyl diphosphate (IPP) and dimethylallyl diphosphate (DMAPP). Acts in the terminal step of the DOXP/MEP pathway for isoprenoid precursor biosynthesis. The chain is 4-hydroxy-3-methylbut-2-enyl diphosphate reductase from Xylella fastidiosa (strain M12).